Reading from the N-terminus, the 299-residue chain is Myozenin-1 (299 aa).

The tract at residues 1-34 (MPLSGTPAPNKKRKSSKLIMELTGGGQESSGLNL) is disordered. Serine 82 is subject to Phosphoserine. Residues 102–174 (GQGFSYSKSN…TGSGDQAGGE (73 aa)) form a disordered region. 2 stretches are compositionally biased toward gly residues: residues 112 to 125 (GRGGSQAGGSGSAG) and 137 to 173 (SGSGAGGTGGPAGQAGRGGAAGTAGVGETGSGDQAGG).

It belongs to the myozenin family. As to quaternary structure, interacts with ACTN2, ACTN3, FLNA, FLNB, FLNC, LDB3, PPP3CA and TCAP. Interacts via its C-terminal region with MYOT. As to expression, expressed primarily in skeletal muscle. Detected at lower levels in heart, prostate and pancreas.

It is found in the nucleus. It localises to the cell projection. Its subcellular location is the pseudopodium. Its function is as follows. Myozenins may serve as intracellular binding proteins involved in linking Z-disk proteins such as alpha-actinin, gamma-filamin, TCAP/telethonin, LDB3/ZASP and localizing calcineurin signaling to the sarcomere. Plays an important role in the modulation of calcineurin signaling. May play a role in myofibrillogenesis. The polypeptide is Myozenin-1 (Homo sapiens (Human)).